The chain runs to 141 residues: MQFFISSAILFSYAFCQSIPNVILTGEPRVVARRILNVDMKAAQQLALPDDQQHVRYQVNVVRNQENPSDSTYLTGERTPVTVYRRILRPARITFTGDGVITDSWQGTSDAVEMESWTLNRRPTIDGSFVQPTQNQQGAFH.

This is an uncharacterized protein from Caenorhabditis elegans.